The primary structure comprises 288 residues: 4-hydroxy-3-methylbut-2-enyl diphosphate reductase (288 aa).

[4Fe-4S] cluster is bound at residue C13. Residues H41 and H75 each contribute to the (2E)-4-hydroxy-3-methylbut-2-enyl diphosphate site. Dimethylallyl diphosphate contacts are provided by H41 and H75. Residues H41 and H75 each coordinate isopentenyl diphosphate. A [4Fe-4S] cluster-binding site is contributed by C97. Residue H130 participates in (2E)-4-hydroxy-3-methylbut-2-enyl diphosphate binding. Dimethylallyl diphosphate is bound at residue H130. H130 contributes to the isopentenyl diphosphate binding site. Residue E132 is the Proton donor of the active site. T168 is a binding site for (2E)-4-hydroxy-3-methylbut-2-enyl diphosphate. C199 provides a ligand contact to [4Fe-4S] cluster. S227, S228, N229, and S271 together coordinate (2E)-4-hydroxy-3-methylbut-2-enyl diphosphate. Residues S227, S228, N229, and S271 each contribute to the dimethylallyl diphosphate site. S227, S228, N229, and S271 together coordinate isopentenyl diphosphate.

It belongs to the IspH family. [4Fe-4S] cluster serves as cofactor.

The enzyme catalyses isopentenyl diphosphate + 2 oxidized [2Fe-2S]-[ferredoxin] + H2O = (2E)-4-hydroxy-3-methylbut-2-enyl diphosphate + 2 reduced [2Fe-2S]-[ferredoxin] + 2 H(+). The catalysed reaction is dimethylallyl diphosphate + 2 oxidized [2Fe-2S]-[ferredoxin] + H2O = (2E)-4-hydroxy-3-methylbut-2-enyl diphosphate + 2 reduced [2Fe-2S]-[ferredoxin] + 2 H(+). The protein operates within isoprenoid biosynthesis; dimethylallyl diphosphate biosynthesis; dimethylallyl diphosphate from (2E)-4-hydroxy-3-methylbutenyl diphosphate: step 1/1. It functions in the pathway isoprenoid biosynthesis; isopentenyl diphosphate biosynthesis via DXP pathway; isopentenyl diphosphate from 1-deoxy-D-xylulose 5-phosphate: step 6/6. In terms of biological role, catalyzes the conversion of 1-hydroxy-2-methyl-2-(E)-butenyl 4-diphosphate (HMBPP) into a mixture of isopentenyl diphosphate (IPP) and dimethylallyl diphosphate (DMAPP). Acts in the terminal step of the DOXP/MEP pathway for isoprenoid precursor biosynthesis. This chain is 4-hydroxy-3-methylbut-2-enyl diphosphate reductase, found in Phocaeicola vulgatus (strain ATCC 8482 / DSM 1447 / JCM 5826 / CCUG 4940 / NBRC 14291 / NCTC 11154) (Bacteroides vulgatus).